Reading from the N-terminus, the 387-residue chain is 3-hydroxy-D-aspartate aldolase (387 aa).

Lys62 carries the post-translational modification N6-(pyridoxal phosphate)lysine. Position 85 (Gln85) interacts with pyridoxal 5'-phosphate. The segment at 199 to 228 (HGQLRGPQGQAGRRHCPGERGRGRAGGRGL) is disordered. Pyridoxal 5'-phosphate is bound by residues Thr238, 256 to 257 (GS), and Tyr265. 2 residues coordinate Mg(2+): His355 and Asp357.

This sequence belongs to the DSD1 family. In terms of assembly, homodimer. It depends on pyridoxal 5'-phosphate as a cofactor. Mn(2+) serves as cofactor. Requires Mg(2+) as cofactor. Co(2+) is required as a cofactor.

It catalyses the reaction (3S)-3-hydroxy-D-aspartate = glyoxylate + glycine. It carries out the reaction (3R)-3-hydroxy-D-aspartate = glyoxylate + glycine. Its function is as follows. Catalyzes the condensation of glyoxylate and glycine into (2R,3S)-beta-hydroxyaspartate ((3S)-3-hydroxy-D-aspartate). Functions in glyoxylate assimilation via the beta-hydroxyaspartate cycle (BHAC). In vitro catalyzes the cleavage of both D-erythro- and D-threo-3-hydroxyaspartate to glycine and glyoxylate. Also acts on D-threonine, D-3-phenylserine and D-3-3,4-methylenedioxyphenylserine. The polypeptide is 3-hydroxy-D-aspartate aldolase (dhaa) (Paracoccus denitrificans).